A 247-amino-acid chain; its full sequence is MNVLPCSINTLKGLYDISGVEVGQHFYWQIGGFQVHAQVLITSWVVIAILLGSATVAVRNPQTIPTDGQNFFEYVLEFIRDLSKTQIGEEYGPWVPFIGTMFLFIFVSNWSGALLPWKIIQLPHGELAAPTNDINTTVALALPTSVAYFYAGLTKKGLGYFGKYIQPTPILLPINILEDFTKPLSLSFRLFGNILADELVVVVLVSLVPSVVPIPVMFLGLFTSGIQALIFATLAAAYIGESMEGHH.

5 helical membrane-spanning segments follow: residues 38–58 (QVLITSWVVIAILLGSATVAV), 95–115 (VPFIGTMFLFIFVSNWSGALL), 134–154 (INTTVALALPTSVAYFYAGLT), 199–219 (LVVVVLVSLVPSVVPIPVMFL), and 220–240 (GLFTSGIQALIFATLAAAYIG).

This sequence belongs to the ATPase A chain family. As to quaternary structure, F-type ATPases have 2 components, CF(1) - the catalytic core - and CF(0) - the membrane proton channel. CF(1) has five subunits: alpha(3), beta(3), gamma(1), delta(1), epsilon(1). CF(0) has four main subunits: a, b, b' and c.

It is found in the plastid. It localises to the chloroplast thylakoid membrane. In terms of biological role, key component of the proton channel; it plays a direct role in the translocation of protons across the membrane. This is ATP synthase subunit a, chloroplastic from Platanus occidentalis (Sycamore).